The primary structure comprises 473 residues: Lipid A galacturonosyltransferase RgtD (473 aa).

10 helical membrane passes run 6 to 26, 68 to 88, 94 to 114, 118 to 138, 160 to 180, 190 to 210, 238 to 258, 271 to 291, 295 to 315, and 327 to 347; these read GLLIVLGFTLWRVVMLNFDAT, AIYWIRLLGPLIHMAAALVLM, FVGPEIEGWTGATYITLPGVA, VFFSTDVILLFFIAIALLAYF, FLTKYAVLFVVPGGAIALLLI, VIIAVAVAAVVALPNLWWNLQ, FFAAQFGVVGPIIFFAMLWAV, KMLVWLSMPVVLLITLQATVA, ANWAVTAYVAGTILAVWLLYL, and INGIASLLFPLATIFPHQLLL.

It is found in the cell membrane. Its pathway is bacterial outer membrane biogenesis; LPS lipid A biosynthesis. Its function is as follows. Involved in the modification of the lipopolysaccharide (LPS) lipid A moiety. Catalyzes the transfer of a galacturonic acid (GalA) residue to the 4'-position of 4'-dephosphorylated lipid A, using dodecaprenyl phosphate-GalA as the donor substrate. Acts before the other GalA transferases RgtA, RgtB and RgtC. The chain is Lipid A galacturonosyltransferase RgtD from Rhizobium johnstonii (strain DSM 114642 / LMG 32736 / 3841) (Rhizobium leguminosarum bv. viciae).